A 734-amino-acid chain; its full sequence is Ribosomal RNA large subunit methyltransferase K/L (734 aa).

One can recognise a THUMP domain in the interval 49–167; sequence HAYRICMWSR…KTEHTYCLDL (119 aa).

Belongs to the methyltransferase superfamily. RlmKL family.

It localises to the cytoplasm. The catalysed reaction is guanosine(2445) in 23S rRNA + S-adenosyl-L-methionine = N(2)-methylguanosine(2445) in 23S rRNA + S-adenosyl-L-homocysteine + H(+). It catalyses the reaction guanosine(2069) in 23S rRNA + S-adenosyl-L-methionine = N(2)-methylguanosine(2069) in 23S rRNA + S-adenosyl-L-homocysteine + H(+). Its function is as follows. Specifically methylates the guanine in position 2445 (m2G2445) and the guanine in position 2069 (m7G2069) of 23S rRNA. The sequence is that of Ribosomal RNA large subunit methyltransferase K/L from Acinetobacter baumannii (strain SDF).